A 251-amino-acid polypeptide reads, in one-letter code: uncharacterized protein (251 aa).

Belongs to the FAM243 family.

This is an uncharacterized protein from Mus musculus (Mouse).